We begin with the raw amino-acid sequence, 341 residues long: Glyceraldehyde-3-phosphate dehydrogenase 2 (341 aa).

Residues arginine 12–isoleucine 13, arginine 78, and threonine 120 each bind NAD(+). D-glyceraldehyde 3-phosphate-binding positions include serine 152–threonine 154 and threonine 183. The active-site Nucleophile is the cysteine 153. NAD(+) is bound at residue asparagine 184. Residues arginine 198, threonine 211–glycine 212, and arginine 234 contribute to the D-glyceraldehyde 3-phosphate site. Asparagine 313 contacts NAD(+).

This sequence belongs to the glyceraldehyde-3-phosphate dehydrogenase family. As to quaternary structure, homotetramer.

Its subcellular location is the cytoplasm. The enzyme catalyses D-glyceraldehyde 3-phosphate + phosphate + NAD(+) = (2R)-3-phospho-glyceroyl phosphate + NADH + H(+). It participates in carbohydrate degradation; glycolysis; pyruvate from D-glyceraldehyde 3-phosphate: step 1/5. Catalyzes the oxidative phosphorylation of glyceraldehyde 3-phosphate (G3P) to 1,3-bisphosphoglycerate (BPG) using the cofactor NAD. The first reaction step involves the formation of a hemiacetal intermediate between G3P and a cysteine residue, and this hemiacetal intermediate is then oxidized to a thioester, with concomitant reduction of NAD to NADH. The reduced NADH is then exchanged with the second NAD, and the thioester is attacked by a nucleophilic inorganic phosphate to produce BPG. This is Glyceraldehyde-3-phosphate dehydrogenase 2 (gapA2) from Staphylococcus epidermidis (strain ATCC 12228 / FDA PCI 1200).